The sequence spans 1123 residues: Adenylyl cyclase X E (1123 aa).

Over 1–47 (MPRSLGNCQLNYSKERMWEPGYLKAKCAELRLESEFRLYRIRLWKSY) the chain is Cytoplasmic. A helical membrane pass occupies residues 48-68 (LLTFFMLHIFVTSVHCALLLA). The Extracellular segment spans residues 69-73 (TIERR). A helical transmembrane segment spans residues 74 to 94 (SIIYFDVALSIGCALVLILVL). The Cytoplasmic portion of the chain corresponds to 95-106 (SVNFCDEFIAKH). A helical transmembrane segment spans residues 107-127 (TWYMYASSIFASLTLVFADLT). Topologically, residues 128–137 (ESIYHTYAHS) are extracellular. Residues 138-158 (WILGTFYDTYIIYMIYMFLPI) form a helical membrane-spanning segment. Residues 159 to 163 (HFISG) are Cytoplasmic-facing. Residues 164-184 (AVLLALLVSGLYILYFVIFIA) form a helical membrane-spanning segment. Residues 185–196 (QGFAQFASALFS) are Extracellular-facing. A helical transmembrane segment spans residues 197–217 (VGGMSVDIVHYLCLNLVGIFY). Residues 218-581 (RVMNDTVVRS…YLKQTDYMYK (364 aa)) are Cytoplasmic-facing. ATP contacts are provided by residues 346–348 (LGD) and arginine 392. Position 348 (aspartate 348) interacts with Mg(2+). Residues 582 to 602 (YSIILSASVGCSLVYIELMDT) traverse the membrane as a helical segment. Over 603 to 608 (QMICSS) the chain is Extracellular. The helical transmembrane segment at 609 to 629 (CFVLPASVATIQCILALIAWY) threads the bilayer. Over 630 to 667 (KKYCWTRYGRNNVPHHYNGFSCFIFRIHDKILNSLPIR) the chain is Cytoplasmic. A helical transmembrane segment spans residues 668–688 (ICIYLFLMISSFFVMCLIVMS). Residues 689 to 719 (CQREEFEMAYIEERLFHYEQEAHICFHPWVT) are Extracellular-facing. The helical transmembrane segment at 720-740 (TNMLSLMICLTFTFAHIPIMV) threads the bilayer. At 741–743 (KTA) the chain is on the cytoplasmic side. Residues 744–764 (VAILETLAYLLLIFFQFDFVF) traverse the membrane as a helical segment. Topologically, residues 765–772 (HHSVTTNP) are extracellular. The helical transmembrane segment at 773 to 793 (YFKSEYAHALLICITFLIMFV) threads the bilayer. At 794–1123 (KERQIEFTNK…STSRHTLQSL (330 aa)) the chain is on the cytoplasmic side. Residues lysine 903, 1014–1016 (DIW), 1021–1025 (NMASR), and lysine 1061 each bind ATP.

It belongs to the adenylyl cyclase class-4/guanylyl cyclase family. In terms of tissue distribution, expressed in labella.

The protein resides in the membrane. The catalysed reaction is ATP = 3',5'-cyclic AMP + diphosphate. Catalyzes the formation of the signaling molecule cAMP in response to G-protein signaling. The sequence is that of Adenylyl cyclase X E from Drosophila melanogaster (Fruit fly).